The sequence spans 179 residues: Large ribosomal subunit protein bL27c (179 aa).

The transit peptide at 1–51 (MAVSFSLVGAFKGLSLASSSSFLKGDFGAAFPVAPKFSVSFPLKSPLTIES) directs the protein to the chloroplast.

The protein belongs to the bacterial ribosomal protein bL27 family. In terms of assembly, part of the 50S ribosomal subunit.

It is found in the plastid. The protein localises to the chloroplast. The polypeptide is Large ribosomal subunit protein bL27c (RPL27) (Nicotiana tabacum (Common tobacco)).